The chain runs to 974 residues: Cell division control protein 15 (974 aa).

One can recognise a Protein kinase domain in the interval Y25–I272. ATP contacts are provided by residues I31 to V39 and K54. Residue D146 is the Proton acceptor of the active site. Positions C360–L702 are self association domain. The segment covering S554–P563 has biased composition (low complexity). The tract at residues S554–M592 is disordered. 2 positions are modified to phosphoserine: S561 and S567. A compositionally biased stretch (polar residues) spans T564–P579. Residues T751–T974 are auto-inhibitory domain. T870 bears the Phosphothreonine mark. The interval A941–T974 is disordered. Residues T948–D963 are compositionally biased toward basic and acidic residues.

Belongs to the protein kinase superfamily. Ser/Thr protein kinase family. Homodimer. Interacts with TEM1. Post-translationally, phosphorylation by CDK1 reduces the binding to the mother spindle pole body. The extent of phosphorylation gradually increases during cell-cycle progression until some point during late anaphase/telophase when it is rapidly dephosphorylated by CDC14. Phosphorylation inhibits kinase activity and dephosphorylation by CDC14 activates CDC15.

The protein resides in the cytoplasm. Its subcellular location is the cytoskeleton. The protein localises to the spindle pole. It localises to the bud neck. It carries out the reaction L-seryl-[protein] + ATP = O-phospho-L-seryl-[protein] + ADP + H(+). It catalyses the reaction L-threonyl-[protein] + ATP = O-phospho-L-threonyl-[protein] + ADP + H(+). With respect to regulation, kinase activity is inhibited by phosphorylation and activated by dephosphorylation by CDC14. Protein kinase of the mitotic exit network (MEN) essential for late nuclear division in the mitotic cycle. Promotes mitotic exit by phosphorylating DBF2 and directly switching on DBF2 kinase activity. Involved in the localization of DBF2 and DBF20 to the neck which is necessary to undergo cytokinesis. Plays a role in segregation of chromosomes during recovery from spindle checkpoint activation. Required for spindle pole localization of CDK1 and inactivation of CDC2 kinase activity at the end of mitosis. Required for spindle disassembly after meiosis II and plays a role in spore morphogenesis. The sequence is that of Cell division control protein 15 (CDC15) from Saccharomyces cerevisiae (strain ATCC 204508 / S288c) (Baker's yeast).